A 235-amino-acid chain; its full sequence is Phosphoribosylaminoimidazole-succinocarboxamide synthase (235 aa).

The protein belongs to the SAICAR synthetase family.

It carries out the reaction 5-amino-1-(5-phospho-D-ribosyl)imidazole-4-carboxylate + L-aspartate + ATP = (2S)-2-[5-amino-1-(5-phospho-beta-D-ribosyl)imidazole-4-carboxamido]succinate + ADP + phosphate + 2 H(+). The protein operates within purine metabolism; IMP biosynthesis via de novo pathway; 5-amino-1-(5-phospho-D-ribosyl)imidazole-4-carboxamide from 5-amino-1-(5-phospho-D-ribosyl)imidazole-4-carboxylate: step 1/2. The sequence is that of Phosphoribosylaminoimidazole-succinocarboxamide synthase from Clostridium botulinum (strain Eklund 17B / Type B).